Reading from the N-terminus, the 306-residue chain is MEVTFFGTSAGLPTKERNTQSIALNLEPYSNSIWLFDVGEGTQHQILRHSIKLGKIDHIFITHMHGDHIFGLPGLLTSRSFQGGENKPLTIIGPKGIQNYIETSLQLSESHLNYPITYIEINQQLAYHHNGFTVQAEMLNHGIPSFGYRIEAPIMPGTINVEALRGIGLEPGPKYQEVKLQETFEYKGLIYNSDDFKGKAKPGPIISIFGDTKPCENEYELAKNSDLMIHEATYIEGDKKLANNYHHSHIDDVFNLIKQANVNKSLITHISNRYNIDEVTSIYNELSLDQTSPHFYFVKDFDTFKI.

Zn(2+) contacts are provided by H63, H65, D67, H68, H141, D211, and H269. The active-site Proton acceptor is D67.

Belongs to the RNase Z family. Homodimer. Zn(2+) serves as cofactor.

It catalyses the reaction Endonucleolytic cleavage of RNA, removing extra 3' nucleotides from tRNA precursor, generating 3' termini of tRNAs. A 3'-hydroxy group is left at the tRNA terminus and a 5'-phosphoryl group is left at the trailer molecule.. Functionally, zinc phosphodiesterase, which displays some tRNA 3'-processing endonuclease activity. Probably involved in tRNA maturation, by removing a 3'-trailer from precursor tRNA. The sequence is that of Ribonuclease Z from Staphylococcus epidermidis (strain ATCC 12228 / FDA PCI 1200).